Reading from the N-terminus, the 571-residue chain is LLVVGVAIGVVTFVNKGGGAGGDKTLNSHQKAVESLCASATDKGSCAKTLDPVKSDDPSKLIKAFMLATKDAVTKSTNFTASTEEGMGKNMNATSKAVLDYCKRVLMYALEDLETIVEEMGEDLQQSGSKMDQLKQWLTGVFNYQTDCIDDIEESELRKVMGEGIRHSKILSSNAIDIFHALTTAMSQMNVKVDDMKKGNLGETPAPDRDLLEDLDQKGLPKWHSDKDRKLMAQAGRPGAPADEGIGEGGGGGGKIKPTHVVAKDGSGQFKTISEAVKACPEKNPGRCIIYIKAGVYKEQVTIPKKVNNVFMFGDGATQTIITFDRSVGLSPGTTTSLSGTVQVESEGFMAKWIGFQNTAGPLGNQAVAFRVNGDRAVIFNCRFDGYQDTLYVNNGRQFYRNIVVSGTVDFINGKSATVIQNSLILCRKGSPGQTNHVTADGKQKGKAVKIGIVLHNCRIMADKELEADRLTVKSYLGRPWKPFATTAVIGTEIGDLIQPTGWNEWQGEKFHLTATYVEFNNRGPGANPAARVPWAKMAKSAAEVERFTVANWLTPANWIQEANVTVQLGL.

Residues 27 to 178 (NSHQKAVESL…KILSSNAIDI (152 aa)) form a pectinesterase inhibitor region. The tract at residues 233–254 (AQAGRPGAPADEGIGEGGGGGG) is disordered. The tract at residues 259–558 (THVVAKDGSG…TVANWLTPAN (300 aa)) is pectinesterase. Substrate contacts are provided by threonine 336 and glutamine 366. The Proton donor; for pectinesterase activity role is filled by aspartate 389. The active-site Nucleophile; for pectinesterase activity is the aspartate 410. Substrate contacts are provided by arginine 479 and tryptophan 481.

It in the N-terminal section; belongs to the PMEI family. The protein in the C-terminal section; belongs to the pectinesterase family.

It localises to the secreted. It is found in the cell wall. It catalyses the reaction [(1-&gt;4)-alpha-D-galacturonosyl methyl ester](n) + n H2O = [(1-&gt;4)-alpha-D-galacturonosyl](n) + n methanol + n H(+). It participates in glycan metabolism; pectin degradation; 2-dehydro-3-deoxy-D-gluconate from pectin: step 1/5. Its function is as follows. Acts in the modification of cell walls via demethylesterification of cell wall pectin. The sequence is that of Pectinesterase/pectinesterase inhibitor from Brassica campestris (Field mustard).